Reading from the N-terminus, the 463-residue chain is GTPase Der (463 aa).

Positions 1–20 (MDEGDEDLISGRGFTEGARK) are disordered. 2 consecutive EngA-type G domains span residues 27–190 (GVLA…KQAE) and 202–375 (RRVA…ESWD). GTP contacts are provided by residues 33 to 40 (GRPNVGKS), 80 to 84 (DTGGW), 142 to 145 (NKID), 208 to 215 (GRPNVGKS), 255 to 259 (DTAGI), and 320 to 323 (NKWD). In terms of domain architecture, KH-like spans 376–458 (QRIPTGKLNA…PIQISVNIRE (83 aa)).

This sequence belongs to the TRAFAC class TrmE-Era-EngA-EngB-Septin-like GTPase superfamily. EngA (Der) GTPase family. Associates with the 50S ribosomal subunit.

Functionally, GTPase that plays an essential role in the late steps of ribosome biogenesis. This chain is GTPase Der, found in Bifidobacterium longum (strain NCC 2705).